The sequence spans 32 residues: Alpha-conotoxin RgIA (32 aa).

A propeptide spanning residues 1–19 (SNKRKNAAMLDMIAQHAIR) is cleaved from the precursor. 2 cysteine pairs are disulfide-bonded: cysteine 21–cysteine 27 and cysteine 22–cysteine 31.

It belongs to the conotoxin A superfamily. Post-translationally, the disulfide bond CysI-CysIII is important for alpha-9-alpha-10 subtype inhibition, whereas the bond CysII-CysIV contributes to GABA(B) modulation. Expressed by the venom duct.

It is found in the secreted. Its function is as follows. This toxin target two types of receptors, the nicotinic acetylcholine receptor (nAChR) and the G-protein-coupled receptor GABA(B). It specifically inhibits the alpha-9-alpha-10/CHRNA9-CHRNA10 nAChR, with preference for rat receptors. It interacts with the alpha-10(+)/alpha-9(-)interface of the receptor. It shows a two order of magnitude species difference potency for the rat versus human alpha-9-alpha-10 nAChR, due to the Thr-86 located in the alpha-9 nAChR subunit. This toxin also shows inhibition of high voltage-activated (HVA) calcium channels (Cav2.2) by acting on GABA(B) receptors (GABBR1 and GABBR2). In vivo, this toxin produces an acute antinociceptive effect in peripheral nerve-injured rats, which may be related to the inhibition of immune cell buildup at the site of nerve injury. In addition, when intramuscularly injected into rats following chronic constriction injury of the sciatic nerve, this toxin protects peripheral nervous tissues as well as prevents central maladaptive plasticity by inhibiting glial cell activation. The chain is Alpha-conotoxin RgIA from Conus regius (Crown cone).